We begin with the raw amino-acid sequence, 483 residues long: NADPH:adrenodoxin oxidoreductase, mitochondrial (483 aa).

The transit peptide at 1 to 14 (MSRYLARYMVSRYF) directs the protein to the mitochondrion. FAD contacts are provided by Ala32, Asp53, Leu61, and Leu97. NADP(+) is bound by residues 169–172 (QGNV), 213–214 (RR), and Glu225. FAD is bound by residues Trp391 and 398–400 (GII). Gly398 is an NADP(+) binding site.

It belongs to the ferredoxin--NADP reductase type 1 family. It depends on FAD as a cofactor.

Its subcellular location is the mitochondrion. It catalyses the reaction 2 reduced [adrenodoxin] + NADP(+) + H(+) = 2 oxidized [adrenodoxin] + NADPH. Its function is as follows. Associates in vitro with the adrenodoxin-like protein MFDX1 to form an efficient low potential electron transfer chain that is able to reduce cytochrome C. Functions as accessory mitochondrial protein involved with BIO2 in the plant biotin synthase reaction. The sequence is that of NADPH:adrenodoxin oxidoreductase, mitochondrial from Arabidopsis thaliana (Mouse-ear cress).